The following is a 68-amino-acid chain: DNA-directed RNA polymerase subunit omega (68 aa).

The protein belongs to the RNA polymerase subunit omega family. The RNAP catalytic core consists of 2 alpha, 1 beta, 1 beta' and 1 omega subunit. When a sigma factor is associated with the core the holoenzyme is formed, which can initiate transcription.

It catalyses the reaction RNA(n) + a ribonucleoside 5'-triphosphate = RNA(n+1) + diphosphate. Its function is as follows. Promotes RNA polymerase assembly. Latches the N- and C-terminal regions of the beta' subunit thereby facilitating its interaction with the beta and alpha subunits. The sequence is that of DNA-directed RNA polymerase subunit omega from Chromobacterium violaceum (strain ATCC 12472 / DSM 30191 / JCM 1249 / CCUG 213 / NBRC 12614 / NCIMB 9131 / NCTC 9757 / MK).